The chain runs to 346 residues: Protein MelA (346 aa).

2 VOC domains span residues G12 to A141 and E155 to K305. Positions 158, 237, and 314 each coordinate Fe cation.

Belongs to the 4HPPD family. Fe cation is required as a cofactor.

The protein resides in the cytoplasm. It participates in pigment biosynthesis; melanin biosynthesis. This chain is Protein MelA (melA), found in Shewanella colwelliana (Alteromonas colwelliana).